The sequence spans 207 residues: MGMLEVRELLCERDERTLFSGLSFTLNAGEWVQITGSNGAGKTTLLRLLTGLSRPDAGEVLWQGQPLHQVRDSYHQNLLWIGHQPGIKTRLTALENLHFYHRDGDTAQCLEALAQAGLAGFEDIPVNQLSAGQQRRVALARLWLTRATLWILDEPFTAIDVNGVDRLTQRMAQHTEQGGIVILTTHQPLNVAESKIRRISLTQTRAV.

In terms of domain architecture, ABC transporter spans 4–207; that stretch reads LEVRELLCER…RISLTQTRAV (204 aa). An ATP-binding site is contributed by 36–43; the sequence is GSNGAGKT.

Belongs to the ABC transporter superfamily. CcmA exporter (TC 3.A.1.107) family. As to quaternary structure, the complex is composed of two ATP-binding proteins (CcmA) and two transmembrane proteins (CcmB).

It localises to the cell inner membrane. It catalyses the reaction heme b(in) + ATP + H2O = heme b(out) + ADP + phosphate + H(+). Functionally, part of the ABC transporter complex CcmAB involved in the biogenesis of c-type cytochromes; once thought to export heme, this seems not to be the case, but its exact role is uncertain. Responsible for energy coupling to the transport system. This Escherichia coli O157:H7 protein is Cytochrome c biogenesis ATP-binding export protein CcmA.